A 269-amino-acid chain; its full sequence is Nitrite transporter NirC (269 aa).

Over 1–29 (MFTDTINKCAANAARIARLSANNPLGFWV) the chain is Cytoplasmic. The chain crosses the membrane as a helical span at residues 30–46 (SSAMAGAYVGLGIILIF). Topologically, residues 47 to 58 (TLGNLLDPSVRP) are extracellular. The chain crosses the membrane as a helical span at residues 59–75 (LVMGATFGIALTLVIIA). The Cytoplasmic segment spans residues 76-107 (GSELFTGHTMFLTLGVKAGTISHGQMWAILPQ). The chain crosses the membrane as a helical span at residues 108-125 (TWLGNLVGSVFVALLYSW). Residues 126 to 153 (GGGSLLPVDTSIVHSVALAKTTAPATVL) are Extracellular-facing. Residues 154–172 (FFKGALCNWLVCLAIWMAI) form a helical membrane-spanning segment. Residues 173 to 179 (RTEGTAK) are Cytoplasmic-facing. The helical transmembrane segment at 180–195 (FLAIWWCLLAFIASGY) threads the bilayer. At 196 to 230 (EHSVANMTLFALSWFGHHSDAYTLAGIGHNLLWVT) the chain is on the extracellular side. Residues 231 to 250 (LGNTLSGVVFMGLGYWYATP) form a helical membrane-spanning segment. Over 251–269 (KSERPAPAKINQPEAAANN) the chain is Cytoplasmic.

It belongs to the FNT transporter (TC 1.A.16) family.

The protein localises to the cell inner membrane. In terms of biological role, catalyzes nitrite uptake and nitrite export across the cytoplasmic membrane. The polypeptide is Nitrite transporter NirC (nirC) (Salmonella typhimurium (strain LT2 / SGSC1412 / ATCC 700720)).